A 35-amino-acid polypeptide reads, in one-letter code: U1-theraphotoxin-Hhn1a (35 aa).

Disulfide bonds link Cys-2–Cys-16, Cys-9–Cys-21, and Cys-15–Cys-28.

It belongs to the neurotoxin 10 (Hwtx-1) family. 24 (Hwtx-6) subfamily. As to expression, expressed by the venom gland.

It localises to the secreted. Functionally, gating-modifier toxin that dose-dependently inhibits inactivation of voltage-gated sodium channels and reduces the peak of sodium current in cockroach DUM neurons. In vivo, reversibly paralyzes cockroaches for several hours, paralyzes rat after intracerebroventricular injection and blocks the neuromuscular transmission of the isolated rat phrenic nerve-diaphragm preparation. This Cyriopagopus hainanus (Chinese bird spider) protein is U1-theraphotoxin-Hhn1a.